Here is a 785-residue protein sequence, read N- to C-terminus: Sexual differentiation process protein isp4 (785 aa).

The disordered stretch occupies residues M1–D28. A compositionally biased stretch (basic and acidic residues) spans I10–S26. 16 helical membrane-spanning segments follow: residues M94–L114, L121–F141, L167–A187, F196–A216, F264–Q284, L339–F359, A413–Y433, V461–I481, W490–V510, A512–Y532, L537–A557, I572–L592, Y611–P631, T642–W662, G683–F703, and L732–W752.

This sequence belongs to the oligopeptide OPT transporter family.

The protein localises to the endoplasmic reticulum membrane. The sequence is that of Sexual differentiation process protein isp4 (isp4) from Schizosaccharomyces pombe (strain 972 / ATCC 24843) (Fission yeast).